Here is a 371-residue protein sequence, read N- to C-terminus: Probable dual-specificity RNA methyltransferase RlmN (371 aa).

Catalysis depends on glutamate 113, which acts as the Proton acceptor. The 234-residue stretch at 119-352 (QSWGNSVCVT…TTVRREMGGE (234 aa)) folds into the Radical SAM core domain. Cysteine 126 and cysteine 357 are joined by a disulfide. Residues cysteine 133, cysteine 137, and cysteine 140 each contribute to the [4Fe-4S] cluster site. Residues 182 to 183 (GE), serine 214, 237 to 239 (SLH), and asparagine 313 each bind S-adenosyl-L-methionine. Cysteine 357 functions as the S-methylcysteine intermediate in the catalytic mechanism.

The protein belongs to the radical SAM superfamily. RlmN family. Requires [4Fe-4S] cluster as cofactor.

It localises to the cytoplasm. The catalysed reaction is adenosine(2503) in 23S rRNA + 2 reduced [2Fe-2S]-[ferredoxin] + 2 S-adenosyl-L-methionine = 2-methyladenosine(2503) in 23S rRNA + 5'-deoxyadenosine + L-methionine + 2 oxidized [2Fe-2S]-[ferredoxin] + S-adenosyl-L-homocysteine. The enzyme catalyses adenosine(37) in tRNA + 2 reduced [2Fe-2S]-[ferredoxin] + 2 S-adenosyl-L-methionine = 2-methyladenosine(37) in tRNA + 5'-deoxyadenosine + L-methionine + 2 oxidized [2Fe-2S]-[ferredoxin] + S-adenosyl-L-homocysteine. Its function is as follows. Specifically methylates position 2 of adenine 2503 in 23S rRNA and position 2 of adenine 37 in tRNAs. The protein is Probable dual-specificity RNA methyltransferase RlmN of Symbiobacterium thermophilum (strain DSM 24528 / JCM 14929 / IAM 14863 / T).